Reading from the N-terminus, the 454-residue chain is tRNA modification GTPase MnmE (454 aa).

(6S)-5-formyl-5,6,7,8-tetrahydrofolate-binding residues include R23, E80, and K120. One can recognise a TrmE-type G domain in the interval 216–377; that stretch reads GMKVVIAGRP…LRDHLKQSMG (162 aa). N226 contacts K(+). GTP contacts are provided by residues 226 to 231, 245 to 251, 270 to 273, 335 to 338, and 358 to 360; these read NAGKSS, TAIAGTT, DTAG, NKAD, and SAR. S230 contributes to the Mg(2+) binding site. 3 residues coordinate K(+): T245, I247, and T250. Mg(2+) is bound at residue T251. K454 contributes to the (6S)-5-formyl-5,6,7,8-tetrahydrofolate binding site.

It belongs to the TRAFAC class TrmE-Era-EngA-EngB-Septin-like GTPase superfamily. TrmE GTPase family. In terms of assembly, homodimer. Heterotetramer of two MnmE and two MnmG subunits. It depends on K(+) as a cofactor.

It is found in the cytoplasm. In terms of biological role, exhibits a very high intrinsic GTPase hydrolysis rate. Involved in the addition of a carboxymethylaminomethyl (cmnm) group at the wobble position (U34) of certain tRNAs, forming tRNA-cmnm(5)s(2)U34. This chain is tRNA modification GTPase MnmE, found in Pectobacterium atrosepticum (strain SCRI 1043 / ATCC BAA-672) (Erwinia carotovora subsp. atroseptica).